The chain runs to 295 residues: N-acetylmuramic acid 6-phosphate etherase (295 aa).

The region spanning 54–217 (VIAAFRRGGR…STASMVGIGK (164 aa)) is the SIS domain. Residue Glu-82 is the Proton donor of the active site. Residue Glu-113 is part of the active site.

Belongs to the GCKR-like family. MurNAc-6-P etherase subfamily. Homodimer.

The enzyme catalyses N-acetyl-D-muramate 6-phosphate + H2O = N-acetyl-D-glucosamine 6-phosphate + (R)-lactate. It participates in amino-sugar metabolism; N-acetylmuramate degradation. Functionally, specifically catalyzes the cleavage of the D-lactyl ether substituent of MurNAc 6-phosphate, producing GlcNAc 6-phosphate and D-lactate. The chain is N-acetylmuramic acid 6-phosphate etherase from Geobacillus thermodenitrificans (strain NG80-2).